We begin with the raw amino-acid sequence, 245 residues long: 8-amino-3,8-dideoxy-manno-octulosonate cytidylyltransferase (245 aa).

This sequence belongs to the KdsB family.

The protein localises to the cytoplasm. It carries out the reaction 8-amino-3,8-dideoxy-alpha-D-manno-octulosonate + CTP = CMP-8-amino-3,8-dideoxy-alpha-D-manno-oct-2-ulosonate + diphosphate. It functions in the pathway bacterial outer membrane biogenesis; lipopolysaccharide biosynthesis. Functionally, activates KDO8N (a required 8-carbon sugar) for incorporation into bacterial lipopolysaccharide in the Shewanella genus. In Shewanella halifaxensis (strain HAW-EB4), this protein is 8-amino-3,8-dideoxy-manno-octulosonate cytidylyltransferase.